We begin with the raw amino-acid sequence, 455 residues long: Keratin, type I cuticular Ha5 (455 aa).

Residues Met-1–Glu-97 form a head region. The IF rod domain occupies Glu-97 to Leu-408. The segment at Lys-98–Trp-132 is coil 1A. A linker 1 region spans residues Cys-133–Asp-143. The coil 1B stretch occupies residues Tyr-144–Cys-244. A linker 12 region spans residues Gln-245–Val-260. Residues Asp-261 to Glu-404 form a coil 2 region. The tail stretch occupies residues Asp-405–Phe-455.

The protein belongs to the intermediate filament family.

The protein is Keratin, type I cuticular Ha5 of Ovis aries (Sheep).